A 46-amino-acid polypeptide reads, in one-letter code: Myoregulin (46 aa).

At 1–21 (MTGKNWILISTTTPKSLEDEI) the chain is on the cytoplasmic side. A helical transmembrane segment spans residues 22–42 (VGRLLKILFVIFVDLISIIYV). The Lumenal portion of the chain corresponds to 43-46 (VITS).

As to quaternary structure, homooligomer. Monomer. Interacts with ATP2A1/SERCA1. Interacts as a monomer with ATP2A2/SERCA2; the interaction inhibits ATP2A2 activity.

The protein resides in the sarcoplasmic reticulum membrane. Its function is as follows. Inhibits the activity of ATP2A1/SERCA1 ATPase in sarcoplasmic reticulum by decreasing the apparent affinity of the ATPase for Ca(2+), thereby acting as a key regulator of skeletal muscle activity. Its high expression in adult skeletal muscle, suggests that it constitutes the predominant regulator of ATP2A1/SERCA1 in adult skeletal muscle. Also inhibits the activity of ATP2A2/SERCA2 and ATP2A3/SERCA3. In Homo sapiens (Human), this protein is Myoregulin.